The following is a 161-amino-acid chain: Nucleotide-binding protein NE2248 (161 aa).

The protein belongs to the YajQ family.

Nucleotide-binding protein. The sequence is that of Nucleotide-binding protein NE2248 from Nitrosomonas europaea (strain ATCC 19718 / CIP 103999 / KCTC 2705 / NBRC 14298).